Here is a 215-residue protein sequence, read N- to C-terminus: Large ribosomal subunit protein uL4 (215 aa).

The disordered stretch occupies residues 46 to 72; sequence TAKSKNRAEVSGGGRKPWAQKGGGRAR. A compositionally biased stretch (gly residues) spans 56-71; that stretch reads SGGGRKPWAQKGGGRA.

This sequence belongs to the universal ribosomal protein uL4 family. Part of the 50S ribosomal subunit.

Functionally, one of the primary rRNA binding proteins, this protein initially binds near the 5'-end of the 23S rRNA. It is important during the early stages of 50S assembly. It makes multiple contacts with different domains of the 23S rRNA in the assembled 50S subunit and ribosome. Forms part of the polypeptide exit tunnel. This Helicobacter pylori (strain G27) protein is Large ribosomal subunit protein uL4.